The sequence spans 500 residues: Glycerol kinase (500 aa).

Thr13 is an ADP binding site. Thr13, Thr14, and Ser15 together coordinate ATP. Thr13 serves as a coordination point for sn-glycerol 3-phosphate. Arg17 serves as a coordination point for ADP. Sn-glycerol 3-phosphate is bound by residues Arg83, Glu84, and Tyr135. Positions 83, 84, and 135 each coordinate glycerol. Phosphohistidine; by HPr is present on His231. Position 245 (Asp245) interacts with sn-glycerol 3-phosphate. The glycerol site is built by Asp245 and Gln246. 2 residues coordinate ADP: Thr267 and Gly310. Residues Thr267, Gly310, Gln314, and Gly411 each contribute to the ATP site. Residues Gly411 and Asn415 each coordinate ADP.

Belongs to the FGGY kinase family. As to quaternary structure, homotetramer and homodimer (in equilibrium). In terms of processing, the phosphoenolpyruvate-dependent sugar phosphotransferase system (PTS), including enzyme I, and histidine-containing protein (HPr) are required for the phosphorylation, which leads to the activation of the enzyme.

The catalysed reaction is glycerol + ATP = sn-glycerol 3-phosphate + ADP + H(+). The protein operates within polyol metabolism; glycerol degradation via glycerol kinase pathway; sn-glycerol 3-phosphate from glycerol: step 1/1. Activated by phosphorylation and inhibited by fructose 1,6-bisphosphate (FBP). In terms of biological role, key enzyme in the regulation of glycerol uptake and metabolism. Catalyzes the phosphorylation of glycerol to yield sn-glycerol 3-phosphate. The chain is Glycerol kinase from Oceanobacillus iheyensis (strain DSM 14371 / CIP 107618 / JCM 11309 / KCTC 3954 / HTE831).